The sequence spans 624 residues: Translocator protein BipB (624 aa).

Residues Leu-54 to Gly-99 form a disordered region. A compositionally biased stretch (basic and acidic residues) spans Asp-66–His-88. The stretch at Glu-313–Met-343 forms a coiled coil. 3 consecutive transmembrane segments (helical) span residues Phe-359 to Leu-379, Ala-405 to Cys-425, and Leu-434 to Val-454.

It belongs to the SctE/SipB/YopB family.

It localises to the secreted. Its subcellular location is the host membrane. Functionally, plays a role in the bacterium-induced formation of multinucleated giant cell (MNGC), which is formed after host cell fusion, as well as in the intercellular spreading of bacteria and in the induction of apoptosis in macrophages. May act in concert with other effector proteins to induce fusion of host cell membranes. This is Translocator protein BipB (bipB) from Burkholderia thailandensis (strain ATCC 700388 / DSM 13276 / CCUG 48851 / CIP 106301 / E264).